Here is a 388-residue protein sequence, read N- to C-terminus: Gastricsin (388 aa).

The signal sequence occupies residues 1 to 16 (MKWMVVAFICLQLLEA). Residues 17–59 (TVVKVPLKKFKSIRETMKEKGLLWEFLKTHKHDPARKYRVSDL) constitute a propeptide, activation peptide. One can recognise a Peptidase A1 domain in the interval 73–385 (YFGEISIGTP…DLGNNRVGFA (313 aa)). Aspartate 91 is a catalytic residue. 2 disulfide bridges follow: cysteine 104/cysteine 109 and cysteine 267/cysteine 271. Residue aspartate 276 is part of the active site. Cysteine 310 and cysteine 343 form a disulfide bridge.

It belongs to the peptidase A1 family.

It is found in the secreted. The catalysed reaction is More restricted specificity than pepsin A, but shows preferential cleavage at Tyr-|-Xaa bonds. High activity on hemoglobin.. With respect to regulation, inhibited by pepstatin. Functionally, hydrolyzes a variety of proteins. This chain is Gastricsin (PGC), found in Callithrix jacchus (White-tufted-ear marmoset).